The primary structure comprises 364 residues: Aminomethyltransferase (364 aa).

It belongs to the GcvT family. As to quaternary structure, the glycine cleavage system is composed of four proteins: P, T, L and H.

The catalysed reaction is N(6)-[(R)-S(8)-aminomethyldihydrolipoyl]-L-lysyl-[protein] + (6S)-5,6,7,8-tetrahydrofolate = N(6)-[(R)-dihydrolipoyl]-L-lysyl-[protein] + (6R)-5,10-methylene-5,6,7,8-tetrahydrofolate + NH4(+). Functionally, the glycine cleavage system catalyzes the degradation of glycine. In Photorhabdus laumondii subsp. laumondii (strain DSM 15139 / CIP 105565 / TT01) (Photorhabdus luminescens subsp. laumondii), this protein is Aminomethyltransferase.